A 370-amino-acid chain; its full sequence is Flagellar P-ring protein (370 aa).

A signal peptide spans 1–21 (MKYILIKLSIVMIFIINSASK).

Belongs to the FlgI family. In terms of assembly, the basal body constitutes a major portion of the flagellar organelle and consists of four rings (L,P,S, and M) mounted on a central rod.

The protein localises to the bacterial flagellum basal body. Its function is as follows. Assembles around the rod to form the L-ring and probably protects the motor/basal body from shearing forces during rotation. The polypeptide is Flagellar P-ring protein (Wigglesworthia glossinidia brevipalpis).